We begin with the raw amino-acid sequence, 289 residues long: MYTVKENVSKEAIEEFLQSRKLTLDVPYQFSLGLFENSRLQGVLLYEDSLWESKVLQKKVMNVKLLAANSTGQLKRLFEAFYTVRQMDETDFIFVRVPAEDIGAAHVIQQQPSSYFVGSLLKLAMPPSFYDKTPPFFELGPPEPGDTEAICELARDSFTKSRYFQDPHLSRDAANEIFQEWTRNNLNGRAAVNIVAKHNGEVIGYLQGLSRDDECILDLMAVKPGFEGKRIAFHLLANLIEQPETQKHRTVTAGTQLHNVRAIRLYERMGFTAEQSYYYYHIWPGKEAK.

Residues 137-289 (FELGPPEPGD…YHIWPGKEAK (153 aa)) enclose the N-acetyltransferase domain.

It functions in the pathway spore coat biogenesis; spore coat polysaccharide biosynthesis. This is Spore coat polysaccharide biosynthesis protein SpsD (spsD) from Bacillus subtilis (strain 168).